A 693-amino-acid chain; its full sequence is MADPTTYRPRPGEIPDAPGVYRFRDPHGRVVYVGKAKSLRSRLSSYFQDLSALHPRTQQMVTTASSVEWTVVGTEVEALQLEYSWIKEFDPRFNVKYRDDKSYPYLAVTMGEEVPRVQVMRGAKRKGTRYFGPYGHAWAIRETVDLLLRVFPVRTCSSGVYKRAAASGRPCLLGYIDKCSAPCVGRISVEDHRDLAEDFCSFMAGESGVFLRRLESEMAAASAELDFERAARVRDDINALRRVVEKNAVVLADGTDADVFALAADELEVSVQVFHVRGGRVRGQRGWVTERVEDLDDGALVERLLQQVYGPYATEKGPDGGATGVPREVLVPALPDDAVELAEWLSTLRGSRVSLRIPQRGEKRALAETVRTNAQQALALHKTRRAGDLTSRSRALSELQEELGLAESPLRIECYDISTLQGTHQVGSMVVFEDGLARKSEYRQFVVRGADGQGARDDTEAMHEVITRRFRRYLAQRDVGVAGGGSGEVPAEDDDGVAIAGPVDPETGRPARFAYPPNLVVVDGGPPQVAAAQRALDELGVSDVALVGLAKRLEEVWLPGEEYPLVLPRASEGLYLLQRVRDEAHRFAITHHRKRRGKSMTRSTLDDVPGLGPSRQAALLQAFGSVRRIRAATPEEIAAVPGFGRRTAEQVLAALAPSPDDATTEPGAVGEPGTADGAAADPDGRDAVVVPEG.

Residues 16–95 (DAPGVYRFRD…IKEFDPRFNV (80 aa)) enclose the GIY-YIG domain. The UVR domain occupies 208–243 (GVFLRRLESEMAAASAELDFERAARVRDDINALRRV). A disordered region spans residues 656–693 (APSPDDATTEPGAVGEPGTADGAAADPDGRDAVVVPEG). The span at 672-693 (PGTADGAAADPDGRDAVVVPEG) shows a compositional bias: low complexity.

This sequence belongs to the UvrC family. Interacts with UvrB in an incision complex.

The protein localises to the cytoplasm. Functionally, the UvrABC repair system catalyzes the recognition and processing of DNA lesions. UvrC both incises the 5' and 3' sides of the lesion. The N-terminal half is responsible for the 3' incision and the C-terminal half is responsible for the 5' incision. The chain is UvrABC system protein C from Beutenbergia cavernae (strain ATCC BAA-8 / DSM 12333 / CCUG 43141 / JCM 11478 / NBRC 16432 / NCIMB 13614 / HKI 0122).